The following is a 109-amino-acid chain: Ribonuclease P protein component (109 aa).

The protein belongs to the RnpA family. In terms of assembly, consists of a catalytic RNA component (M1 or rnpB) and a protein subunit.

It carries out the reaction Endonucleolytic cleavage of RNA, removing 5'-extranucleotides from tRNA precursor.. In terms of biological role, RNaseP catalyzes the removal of the 5'-leader sequence from pre-tRNA to produce the mature 5'-terminus. It can also cleave other RNA substrates such as 4.5S RNA. The protein component plays an auxiliary but essential role in vivo by binding to the 5'-leader sequence and broadening the substrate specificity of the ribozyme. In Streptococcus agalactiae serotype III (strain NEM316), this protein is Ribonuclease P protein component.